Here is a 256-residue protein sequence, read N- to C-terminus: Small ribosomal subunit protein eS1 (256 aa).

Ala-2 bears the N-acetylalanine; partial mark.

This sequence belongs to the eukaryotic ribosomal protein eS1 family. As to quaternary structure, component of the small ribosomal subunit. Mature ribosomes consist of a small (40S) and a large (60S) subunit. The 40S subunit contains about 33 different proteins and 1 molecule of RNA (18S). The 60S subunit contains about 49 different proteins and 3 molecules of RNA (25S, 5.8S and 5S).

Its subcellular location is the cytoplasm. In Lachancea thermotolerans (strain ATCC 56472 / CBS 6340 / NRRL Y-8284) (Yeast), this protein is Small ribosomal subunit protein eS1.